The following is a 26-amino-acid chain: uncharacterized protein (26 aa).

This is an uncharacterized protein from Saccharomyces cerevisiae (strain ATCC 204508 / S288c) (Baker's yeast).